Reading from the N-terminus, the 227-residue chain is uncharacterized protein (227 aa).

5 helical membrane passes run 27–47 (AVLPGILIIVFIETGLLFPLL), 63–83 (PAPPVTIGVLAPCVALVAVLG), 126–146 (TIILARFVPIARTFVPVIAGV), 153–173 (VFLGFDIVGGVAWGAGVTLAG), and 186–206 (FQLIILAIVFVSLLPALVSAA).

The protein belongs to the DedA family.

The protein resides in the cell membrane. This is an uncharacterized protein from Mycobacterium tuberculosis (strain CDC 1551 / Oshkosh).